Consider the following 2104-residue polypeptide: Transmembrane matrix receptor MUP-4 (2104 aa).

The N-terminal stretch at 1-15 is a signal peptide; it reads MRWVPLVLLPLIASA. The Extracellular portion of the chain corresponds to 16–1860; that stretch reads ATTYQHRQTY…FCETAPSNLP (1845 aa). 3 EGF-like domains span residues 71 to 110, 122 to 163, and 175 to 213; these read VVNECARPSLNACHKDAQCVDLAEGYTCRCNSGFADTSPD, TTNE…VSTS, and SVNECTNGEADCSNNADCFDRADGYECKCRPGFVDASPN. 6 disulfides stabilise this stretch: cysteine 75–cysteine 89, cysteine 83–cysteine 98, cysteine 126–cysteine 142, cysteine 136–cysteine 151, cysteine 179–cysteine 192, and cysteine 186–cysteine 201. Positions 220–265 constitute a WR1 domain; it reads RVCNKPKAPEYYGQQSRQPQCSEGSGCGPNEECRFNTAGEKVCQCR. 3 EGF-like domains span residues 278-315, 327-360, and 377-416; these read VFSQCEQANECDRNAFCSNTYDGPKCQCKDGFLDVSPD, VRNECADGSHDCSHQAACQDTPTGYICSCNSNCI, and AANQCSDKSLNSCDENADCVQLPDGYTCKCFAGYVDVSSN. 7 cysteine pairs are disulfide-bonded: cysteine 282–cysteine 294, cysteine 288–cysteine 303, cysteine 331–cysteine 344, cysteine 338–cysteine 353, cysteine 355–cysteine 359, cysteine 381–cysteine 395, and cysteine 389–cysteine 404. The region spanning 437–612 is the VWFA domain; it reads DLVFLIDGSG…DLNTRLRSAI (176 aa). N-linked (GlcNAc...) asparagine glycosylation is found at asparagine 494 and asparagine 556. EGF-like domains are found at residues 728–772 and 819–857; these read SNDE…NKCE and LIDECAAGVADCDPNAKCTDTDESYICTCNEGFLDKSPE. Disulfide bonds link cysteine 732/cysteine 746, cysteine 740/cysteine 756, cysteine 758/cysteine 771, cysteine 823/cysteine 836, cysteine 830/cysteine 845, cysteine 873/cysteine 886, cysteine 880/cysteine 895, cysteine 923/cysteine 937, cysteine 931/cysteine 946, cysteine 972/cysteine 985, cysteine 979/cysteine 995, cysteine 1020/cysteine 1034, cysteine 1028/cysteine 1046, cysteine 1075/cysteine 1089, cysteine 1083/cysteine 1098, cysteine 1125/cysteine 1139, cysteine 1133/cysteine 1148, cysteine 1173/cysteine 1187, cysteine 1181/cysteine 1196, cysteine 1219/cysteine 1233, and cysteine 1227/cysteine 1242. Residues 869-907 form the EGF-like 9; calcium-binding domain; that stretch reads QRNECLDGTHNCSMNADCIDLPDGFLCRCKEDFVDISPN. Asparagine 879 is a glycosylation site (N-linked (GlcNAc...) asparagine). 7 EGF-like domains span residues 919–958, 968–1007, 1016–1058, 1071–1110, 1121–1160, 1169–1208, and 1215–1254; these read LVNECLITGGHNCHEHAICIDTRDSYKCQCKEGYVDHDEL, LNQICESGKHECDKNARCVEKGANDYECVCNAGFIDKSPL, VEPI…VGAV, LVNECLSASLNSCDAAATCIDLDDGYTCKCPLGSKDESPV, LVNECNIPHLNNCSHFATCIDLEEGYECKCKPEYHDQKPE, IINECLAENLNDCSPNAMCIDKIDGYDCKCKAPFQDEMPS, and RFDECADPKDNDCDKHALCIDTDDSYTCQCKEGFFDEISD. An N-linked (GlcNAc...) asparagine glycan is attached at asparagine 1037. N-linked (GlcNAc...) asparagine glycosylation occurs at asparagine 1132. N-linked (GlcNAc...) asparagine glycosylation is found at asparagine 1271, asparagine 1403, and asparagine 1576. 2 SEA domains span residues 1322 to 1444 and 1495 to 1620; these read PTTS…DDAD and AVES…PEQL. EGF-like domains follow at residues 1622-1658, 1669-1705, and 1717-1754; these read PFSNCYHSDCHPDAICKEVGKGYTCTCPDGFRDLNPS, GVNECEKPELNECSPHARCIDLDYLYKCECIRPYVNS, and SIDYCQDVNYCPLNSTCVNVDEQARCDCKPGFVDLRKS. 11 disulfide bridges follow: cysteine 1626-cysteine 1637, cysteine 1631-cysteine 1646, cysteine 1673-cysteine 1687, cysteine 1681-cysteine 1696, cysteine 1721-cysteine 1733, cysteine 1727-cysteine 1742, cysteine 1776-cysteine 1789, cysteine 1783-cysteine 1798, cysteine 1821-cysteine 1830, cysteine 1824-cysteine 1841, and cysteine 1843-cysteine 1852. Asparagine 1730 and asparagine 1782 each carry an N-linked (GlcNAc...) asparagine glycan. An EGF-like 20; calcium-binding domain is found at 1772-1810; it reads DIDECALGLHNCSAAAICIDKKIGYECQCQEGYEDGNPS. Positions 1817-1853 constitute an EGF-like 21 domain; it reads AASLCGLCNGHGDCIHDALSSNVTCACLDGYTGQFCE. Asparagine 1838 is a glycosylation site (N-linked (GlcNAc...) asparagine). The chain crosses the membrane as a helical span at residues 1861–1881; that stretch reads LILMTLLALLFLLLTLLCCLY. Residues 1882–2104 are Cytoplasmic-facing; that stretch reads MCARCRCFGA…TTKAEEVNYF (223 aa). The segment covering 2031–2040 has biased composition (low complexity); the sequence is SGAMMSSASG. A disordered region spans residues 2031-2104; sequence SGAMMSSASG…TTKAEEVNYF (74 aa). Basic and acidic residues-rich tracts occupy residues 2062–2076 and 2083–2104; these read VYDRTTRTNQSHDFE and TGTERSKREFVTTTKAEEVNYF.

Abundant at hypodermal cell-matrix junctions overlying muscle of threefold embryos. Expression continues in body wall muscle in larvae and adults and is also detected in other regions where cells show mechanical attachment to the hypodermis including the inner surface of the pharynx, overlying anal and intestinal muscles, overlying vulval and uterine sex muscles, male tail muscle attachment zones and the six mechanosensory neurons (at protein level).

It is found in the cell junction. The protein resides in the hemidesmosome. The protein localises to the cytoplasm. It localises to the cytoskeleton. Its subcellular location is the cell membrane. Functionally, required for junctional attachments between hypodermis and muscle, and between the apical epithelial surface and the cuticular matrix. Essential for enclosure of the embryo by the hypodermis, hypodermal integrity, embryo elongation, and maintenance of hypodermal morphology in fully elongated embryos. The protein is Transmembrane matrix receptor MUP-4 of Caenorhabditis elegans.